Consider the following 126-residue polypeptide: MSALDDSIRVEVKTEYIEQQSSPEDQKYLFSYTITIVNLGEQAAKLETRHWIITDANGKITEVQGAGVVGETPTIPPNTAYQYTSGTVLDTPLGIMYGTYGMVSESGERFKATIKPFRLALPGLLH.

The region spanning 2–126 (SALDDSIRVE…FRLALPGLLH (125 aa)) is the ApaG domain.

The protein is Protein ApaG of Shewanella sp. (strain MR-7).